A 148-amino-acid polypeptide reads, in one-letter code: 3-dehydroquinate dehydratase (148 aa).

Catalysis depends on tyrosine 23, which acts as the Proton acceptor. Substrate-binding residues include asparagine 74, histidine 80, and aspartate 87. Catalysis depends on histidine 100, which acts as the Proton donor. Substrate is bound by residues 101-102 and arginine 111; that span reads IS.

Belongs to the type-II 3-dehydroquinase family. In terms of assembly, homododecamer.

It carries out the reaction 3-dehydroquinate = 3-dehydroshikimate + H2O. It participates in metabolic intermediate biosynthesis; chorismate biosynthesis; chorismate from D-erythrose 4-phosphate and phosphoenolpyruvate: step 3/7. Its function is as follows. Catalyzes a trans-dehydration via an enolate intermediate. In Caldanaerobacter subterraneus subsp. tengcongensis (strain DSM 15242 / JCM 11007 / NBRC 100824 / MB4) (Thermoanaerobacter tengcongensis), this protein is 3-dehydroquinate dehydratase.